Here is a 246-residue protein sequence, read N- to C-terminus: Ribonuclease PH (246 aa).

Phosphate contacts are provided by residues Arg91 and 129–131 (GTR).

It belongs to the RNase PH family. In terms of assembly, homohexameric ring arranged as a trimer of dimers.

The catalysed reaction is tRNA(n+1) + phosphate = tRNA(n) + a ribonucleoside 5'-diphosphate. Its function is as follows. Phosphorolytic 3'-5' exoribonuclease that plays an important role in tRNA 3'-end maturation. Removes nucleotide residues following the 3'-CCA terminus of tRNAs; can also add nucleotides to the ends of RNA molecules by using nucleoside diphosphates as substrates, but this may not be physiologically important. Probably plays a role in initiation of 16S rRNA degradation (leading to ribosome degradation) during starvation. This Paraburkholderia phytofirmans (strain DSM 17436 / LMG 22146 / PsJN) (Burkholderia phytofirmans) protein is Ribonuclease PH.